Reading from the N-terminus, the 193-residue chain is Potassium-transporting ATPase KdpC subunit (193 aa).

A helical membrane pass occupies residues 7 to 27; the sequence is PLVVLFVVLTAVTGLAYPAVM.

The protein belongs to the KdpC family. As to quaternary structure, the system is composed of three essential subunits: KdpA, KdpB and KdpC.

It is found in the cell inner membrane. Part of the high-affinity ATP-driven potassium transport (or Kdp) system, which catalyzes the hydrolysis of ATP coupled with the electrogenic transport of potassium into the cytoplasm. This subunit acts as a catalytic chaperone that increases the ATP-binding affinity of the ATP-hydrolyzing subunit KdpB by the formation of a transient KdpB/KdpC/ATP ternary complex. This is Potassium-transporting ATPase KdpC subunit from Burkholderia orbicola (strain MC0-3).